Reading from the N-terminus, the 62-residue chain is Conotoxin reg3.7 (62 aa).

The N-terminal stretch at 1–15 is a signal peptide; sequence RVLLTICLLLFPLSA. Residues 16-45 constitute a propeptide that is removed on maturation; sequence LPLDGDQPADQPARHMQSAERNPRFDPVKR. The tract at residues 17–37 is disordered; it reads PLDGDQPADQPARHMQSAERN. 3 disulfide bridges follow: cysteine 46-cysteine 60, cysteine 47-cysteine 58, and cysteine 52-cysteine 61. A Cysteine amide modification is found at cysteine 61.

This sequence belongs to the conotoxin M superfamily. Expressed by the venom duct.

It localises to the secreted. The protein is Conotoxin reg3.7 of Conus regius (Crown cone).